We begin with the raw amino-acid sequence, 420 residues long: Glutamate-1-semialdehyde 2,1-aminomutase (420 aa).

N6-(pyridoxal phosphate)lysine is present on Lys-259.

Belongs to the class-III pyridoxal-phosphate-dependent aminotransferase family. HemL subfamily. Homodimer. It depends on pyridoxal 5'-phosphate as a cofactor.

Its subcellular location is the cytoplasm. It carries out the reaction (S)-4-amino-5-oxopentanoate = 5-aminolevulinate. It functions in the pathway porphyrin-containing compound metabolism; protoporphyrin-IX biosynthesis; 5-aminolevulinate from L-glutamyl-tRNA(Glu): step 2/2. In Nautilia profundicola (strain ATCC BAA-1463 / DSM 18972 / AmH), this protein is Glutamate-1-semialdehyde 2,1-aminomutase.